A 675-amino-acid polypeptide reads, in one-letter code: MSSASRNILVTCALPYANGSIHLGHMLEHVQADIWVRFQRMRGHNIHFICADDAHGTPIMLKAQQLGITPEEMIAAVSQEHQTDFAGFKISFDNYHSTHSDENRYFSELIYTKLKDNGFIKSKTISQLYDPEKNMFLPDRFVKGTCPKCKAVDQYGDNCEVCGATYSPTELINPKSAVSGATPVMKETEHFFFDLPQFADMLQAWTTSGALQEEISNKLNEWFTSGLHQWDITRDAPYFGFEIPGAPGKFFYVWLDAPIGYMGSFKNLCDKRGDIDFDAFWSQNSDAELYHFIGKDIVYFHSLFWPAMLDGAGFRKPSNIFVHGYVTVNGAKMSKSRGTFIKASTYLQHLDPECLRYYYAAKLNNRIDDLDLNLDDFVARVNSDVVNKLVNLASRTAGFITKRLDGKLADTLSEPALYATFTSASERIAEAYENREFSRAIREIMALADEANRYVDEKAPWVIAKQEGQEAELSAVCSTTLNLFRVLMTYLKPVMPELAARAEAFLNVTLNWNDIEQPLLAHNVAPFKALFNRIDPVKVTAMVDASKEEQQTAAPKATGPLADEPIAPEITYDDFAKLDLRIALIKKAEAVPEADKLLRLQLDLGGEVRQVFAGIKSAYSPEQLEGKLTVMVANLAPRKMRFGMSEGMVLAAGPGGKDLFILEPNAGAKPGMRVK.

The 'HIGH' region signature appears at 15 to 25 (PYANGSIHLGH). The Zn(2+) site is built by Cys146, Cys149, Cys159, and Cys162. A 'KMSKS' region motif is present at residues 332 to 336 (KMSKS). Residue Lys335 coordinates ATP. Positions 574 to 675 (DFAKLDLRIA…AGAKPGMRVK (102 aa)) constitute a tRNA-binding domain.

It belongs to the class-I aminoacyl-tRNA synthetase family. MetG type 1 subfamily. In terms of assembly, homodimer. It depends on Zn(2+) as a cofactor.

The protein resides in the cytoplasm. It catalyses the reaction tRNA(Met) + L-methionine + ATP = L-methionyl-tRNA(Met) + AMP + diphosphate. Functionally, is required not only for elongation of protein synthesis but also for the initiation of all mRNA translation through initiator tRNA(fMet) aminoacylation. In Tolumonas auensis (strain DSM 9187 / NBRC 110442 / TA 4), this protein is Methionine--tRNA ligase.